Here is a 359-residue protein sequence, read N- to C-terminus: S-adenosylmethionine:tRNA ribosyltransferase-isomerase (359 aa).

This sequence belongs to the QueA family. In terms of assembly, monomer.

The protein resides in the cytoplasm. The catalysed reaction is 7-aminomethyl-7-carbaguanosine(34) in tRNA + S-adenosyl-L-methionine = epoxyqueuosine(34) in tRNA + adenine + L-methionine + 2 H(+). It participates in tRNA modification; tRNA-queuosine biosynthesis. Its function is as follows. Transfers and isomerizes the ribose moiety from AdoMet to the 7-aminomethyl group of 7-deazaguanine (preQ1-tRNA) to give epoxyqueuosine (oQ-tRNA). This chain is S-adenosylmethionine:tRNA ribosyltransferase-isomerase, found in Synechococcus sp. (strain ATCC 27144 / PCC 6301 / SAUG 1402/1) (Anacystis nidulans).